The primary structure comprises 276 residues: Aurora kinase C (276 aa).

The region spanning 16–266 is the Protein kinase domain; sequence FEIGRPLGRG…LAQVLKHPWV (251 aa). Residues 22 to 30 and lysine 45 each bind ATP; that span reads LGRGKFGRV. The active-site Proton acceptor is aspartate 139. The residue at position 171 (threonine 171) is a Phosphothreonine; by PKA.

This sequence belongs to the protein kinase superfamily. Ser/Thr protein kinase family. Aurora subfamily. In terms of assembly, component of the chromosomal passenger complex (CPC) composed of at least BIRC5/survivin, CDCA8/borealin, INCENP, AURKB or AURKC; predominantly independent AURKB- and AURKC-containing complexes exist; in the complex interacts directly with BIRC5/survivin and INCENP. Interacts with TACC1. In terms of tissue distribution, expressed only in testis.

It localises to the nucleus. The protein resides in the chromosome. Its subcellular location is the centromere. The protein localises to the cytoplasm. It is found in the cytoskeleton. It localises to the spindle. The enzyme catalyses L-seryl-[protein] + ATP = O-phospho-L-seryl-[protein] + ADP + H(+). The catalysed reaction is L-threonyl-[protein] + ATP = O-phospho-L-threonyl-[protein] + ADP + H(+). Okadaic acid, an inhibitor of protein phosphatase 1 (PP1), protein phosphatase 2A (PP2A) and protein phosphatase 5 (PP5), increases AURKC activity. AURKC is also stabilized through its interaction with INCENP, which also acts as an activator. Its function is as follows. Serine/threonine-protein kinase component of the chromosomal passenger complex (CPC), a complex that acts as a key regulator of mitosis. The CPC complex has essential functions at the centromere in ensuring correct chromosome alignment and segregation and is required for chromatin-induced microtubule stabilization and spindle assembly. Also plays a role in meiosis and more particularly in spermatogenesis. Has redundant cellular functions with AURKB and can rescue an AURKB knockdown. Like AURKB, AURKC phosphorylates histone H3 at 'Ser-10' and 'Ser-28'. AURKC phosphorylates the CPC complex subunits BIRC5/survivin and INCENP leading to increased AURKC activity. Phosphorylates TACC1, another protein involved in cell division, at 'Ser-228'. The chain is Aurora kinase C (Aurkc) from Mus musculus (Mouse).